The chain runs to 333 residues: Abequosyltransferase RfbV (333 aa).

The protein belongs to the glycosyltransferase 2 family.

The catalysed reaction is CDP-alpha-D-abequose + alpha-D-Man-(1-&gt;4)-alpha-L-Rha-(1-&gt;3)-alpha-D-Gal-di-trans,octa-cis-undecaprenyl diphosphate = alpha-D-Abe-(1-&gt;3)-alpha-D-Man-(1-&gt;4)-alpha-L-Rha-(1-&gt;3)-alpha-D-Gal-di-trans,octa-cis-undecaprenyl diphosphate + CDP + H(+). It participates in bacterial outer membrane biogenesis; LPS O-antigen biosynthesis. Catalyzes the transfer of CDP-abequose on D-mannosyl-L-rhamnosyl-D-galactose-1-diphospholipid to yield D-abequosyl-D-mannosyl-rhamnosyl-D-galactose-1-diphospholipid. This Salmonella typhimurium (strain LT2 / SGSC1412 / ATCC 700720) protein is Abequosyltransferase RfbV (rfbV).